Here is a 514-residue protein sequence, read N- to C-terminus: Bifunctional lysine-specific demethylase and histidyl-hydroxylase NO66 (514 aa).

The interval 1 to 53 (MKRGLEEEIEEMSEEEVGVNNNNNGKKKKKKVVKKSKPVPLTKSVPQVSSQPL) is disordered. A compositionally biased stretch (acidic residues) spans 7 to 17 (EEIEEMSEEEV). Positions 25 to 37 (GKKKKKKVVKKSK) are enriched in basic residues. Residues 44-53 (SVPQVSSQPL) show a composition bias toward polar residues. The JmjC domain maps to 180–327 (CSVRLLNPQT…IGKVLNRALE (148 aa)). His226, Asp228, and His291 together coordinate Fe cation.

It belongs to the ROX family. NO66 subfamily. The cofactor is Fe(2+).

It is found in the nucleus. The catalysed reaction is N(6),N(6)-dimethyl-L-lysyl(36)-[histone H3] + 2 2-oxoglutarate + 2 O2 = L-lysyl(36)-[histone H3] + 2 formaldehyde + 2 succinate + 2 CO2. Its function is as follows. Oxygenase that can act as both a histone lysine demethylase and a ribosomal histidine hydroxylase. Specifically demethylates 'Lys-4' (H3K4me) and 'Lys-36' (H3K36me) of histone H3, thereby playing a central role in histone code. In Dictyostelium discoideum (Social amoeba), this protein is Bifunctional lysine-specific demethylase and histidyl-hydroxylase NO66 (jcdg).